A 169-amino-acid polypeptide reads, in one-letter code: Anaerobic nitrite reductase NSHB3 (169 aa).

Residues 15-165 enclose the Globin domain; that stretch reads RFTEEQEALV…LVAAIKQGMK (151 aa). Positions 48 to 52 match the Homodimerization motif; the sequence is EVAPS. The heme b site is built by Ser-58, Lys-72, His-76, Arg-106, Thr-110, and His-111. Residues 118–130 carry the Homodimerization motif; that stretch reads DAHFEVAKFALLE.

It belongs to the plant globin family. In terms of assembly, homodimer. Heme b is required as a cofactor.

Its subcellular location is the cytoplasm. It is found in the nucleus. The enzyme catalyses Fe(III)-heme b-[protein] + nitric oxide + H2O = Fe(II)-heme b-[protein] + nitrite + 2 H(+). Functionally, phytoglobin that reduces nitrite to nitric oxide under anoxic conditions (e.g. during flooding or in waterlogged soil). May not function as an oxygen storage or transport protein. Has an unusually high affinity for O(2) through an hexacoordinate heme iron because of a very low dissociation constant. This is Anaerobic nitrite reductase NSHB3 from Oryza sativa subsp. indica (Rice).